Here is a 750-residue protein sequence, read N- to C-terminus: Catalase-peroxidase (750 aa).

Residues Trp-112 to Tyr-235 constitute a cross-link (tryptophyl-tyrosyl-methioninium (Trp-Tyr) (with M-261)). Residue His-113 is the Proton acceptor of the active site. The segment at residues Tyr-235 to Met-261 is a cross-link (tryptophyl-tyrosyl-methioninium (Tyr-Met) (with W-112)). His-276 provides a ligand contact to heme b.

It belongs to the peroxidase family. Peroxidase/catalase subfamily. In terms of assembly, homodimer or homotetramer. The cofactor is heme b. Post-translationally, formation of the three residue Trp-Tyr-Met cross-link is important for the catalase, but not the peroxidase activity of the enzyme.

It catalyses the reaction H2O2 + AH2 = A + 2 H2O. It carries out the reaction 2 H2O2 = O2 + 2 H2O. Bifunctional enzyme with both catalase and broad-spectrum peroxidase activity. In Christiangramia forsetii (strain DSM 17595 / CGMCC 1.15422 / KT0803) (Gramella forsetii), this protein is Catalase-peroxidase.